Reading from the N-terminus, the 314-residue chain is Serine/threonine-protein phosphatase PP2A-4 catalytic subunit (314 aa).

4 residues coordinate Mn(2+): Asp62, His64, Asp90, and Asn122. The Proton donor role is filled by His123. His172 and His246 together coordinate Mn(2+).

This sequence belongs to the PPP phosphatase family. PP-2A subfamily. It depends on Mn(2+) as a cofactor.

The protein localises to the cytoplasm. The catalysed reaction is O-phospho-L-seryl-[protein] + H2O = L-seryl-[protein] + phosphate. The enzyme catalyses O-phospho-L-threonyl-[protein] + H2O = L-threonyl-[protein] + phosphate. The protein is Serine/threonine-protein phosphatase PP2A-4 catalytic subunit (PP2A4) of Oryza sativa subsp. japonica (Rice).